The following is a 187-amino-acid chain: Meiotically up-regulated gene 155 protein (187 aa).

The segment at 1–24 (MRPTSGCSKDDTIQKQNRRHNTVD) is disordered. The next 2 helical transmembrane spans lie at 83-105 (IISY…PFSH) and 163-183 (VMLT…LFIF).

The protein localises to the cytoplasm. It localises to the nucleus membrane. In terms of biological role, has a role in meiosis. This is Meiotically up-regulated gene 155 protein (mug155) from Schizosaccharomyces pombe (strain 972 / ATCC 24843) (Fission yeast).